Consider the following 253-residue polypeptide: 5'-nucleotidase SurE (253 aa).

Residues Asp-8, Asp-9, Ser-39, and Asn-91 each contribute to the a divalent metal cation site.

It belongs to the SurE nucleotidase family. A divalent metal cation is required as a cofactor.

Its subcellular location is the cytoplasm. The enzyme catalyses a ribonucleoside 5'-phosphate + H2O = a ribonucleoside + phosphate. Functionally, nucleotidase that shows phosphatase activity on nucleoside 5'-monophosphates. The protein is 5'-nucleotidase SurE of Leptothrix cholodnii (strain ATCC 51168 / LMG 8142 / SP-6) (Leptothrix discophora (strain SP-6)).